The primary structure comprises 147 residues: Phosphoribosyl-AMP cyclohydrolase (147 aa).

Residue aspartate 91 coordinates Mg(2+). Cysteine 92 provides a ligand contact to Zn(2+). The Mg(2+) site is built by aspartate 93 and aspartate 95. Zn(2+)-binding residues include cysteine 109 and cysteine 116.

Belongs to the PRA-CH family. In terms of assembly, homodimer. Mg(2+) serves as cofactor. Zn(2+) is required as a cofactor.

The protein localises to the cytoplasm. The catalysed reaction is 1-(5-phospho-beta-D-ribosyl)-5'-AMP + H2O = 1-(5-phospho-beta-D-ribosyl)-5-[(5-phospho-beta-D-ribosylamino)methylideneamino]imidazole-4-carboxamide. It participates in amino-acid biosynthesis; L-histidine biosynthesis; L-histidine from 5-phospho-alpha-D-ribose 1-diphosphate: step 3/9. Functionally, catalyzes the hydrolysis of the adenine ring of phosphoribosyl-AMP. This Rhodopseudomonas palustris (strain BisA53) protein is Phosphoribosyl-AMP cyclohydrolase.